A 1209-amino-acid chain; its full sequence is Calcium-activated potassium channel subunit alpha-1 (1209 aa).

A compositionally biased stretch (gly residues) spans 1 to 23 (MANGGGGGGGSSGGGGGGGGGSG). The interval 1-61 (MANGGGGGGG…SSSSSSSSSV (61 aa)) is disordered. Over 1–86 (MANGGGGGGG…VPCDSRGQRM (86 aa)) the chain is Extracellular. Over residues 25-39 (RMSSNIHANNLSLDA) the composition is skewed to polar residues. Low complexity predominate over residues 40 to 60 (SSSSSSSSSSSSSSSSSSSSS). A helical membrane pass occupies residues 87–107 (WWAFLASSMVTFFGGLFIILL). Residues 108–178 (WRTLKYLWTV…MISAQTLTGR (71 aa)) lie on the Cytoplasmic side of the membrane. S-palmitoyl cysteine attachment occurs at residues C118, C119, and C121. A helical membrane pass occupies residues 179–199 (VLVVLVFALSIGALVIYFIDS). Residues 200–214 (SNPIESCQNFYKDFT) are Extracellular-facing. A helical membrane pass occupies residues 215-235 (LQIDMAFNVFFLLYFGLRFIA). At 236-239 (ANDK) the chain is on the cytoplasmic side. The chain crosses the membrane as a helical span at residues 240–260 (LWFWLEVNSVVDFFTVPPVFV). Over 261–264 (SVYL) the chain is Extracellular. A helical; Voltage-sensor transmembrane segment spans residues 265 to 285 (NRSWLGLRFLRALRLIQFSEI). Topologically, residues 286 to 300 (LQFLNILKTSNSIKL) are cytoplasmic. Residues 301–321 (VNLLSIFISTWLTAAGFIHLV) traverse the membrane as a helical segment. At 322-335 (ENSGDPWENFQNNQ) the chain is on the extracellular side. The pore-forming intramembrane region spans 336 to 358 (ALTYWECVYLLMVTMSTVGYGDV). The Selectivity for potassium signature appears at 352–355 (TVGY). Over 359 to 367 (YAKTTLGRL) the chain is Extracellular. A helical membrane pass occupies residues 368–388 (FMVFFILGGLAMFASYVPEII). The Cytoplasmic segment spans residues 389-1209 (ELIGNRKKYG…KQNRKEMVYR (821 aa)). One can recognise an RCK N-terminal 1 domain in the interval 407-549 (RKHIVVCGHI…WNWKEGDDAI (143 aa)). Residues E439, Q462, and E464 each coordinate Mg(2+). The interval 556–576 (LGFIAQSCLAQGLSTMLANLF) is segment S7. The interval 613–633 (LSFPTVCELCFVKLKLLMIAI) is segment S8. Phosphothreonine is present on D670. At K672 the chain carries Phosphoserine. Positions 681–685 (CKACH) are heme-binding motif. The segment at 703-733 (EDEQPPTLSPKKKQRNGGMRNSPNTSPKLMR) is disordered. T709 carries the post-translational modification Phosphothreonine. S711, S724, and S728 each carry phosphoserine. The segment S9 stretch occupies residues 783–803 (VLSGHVVVCIFGDVSSALIGL). One can recognise an RCK N-terminal 2 domain in the interval 785–929 (SGHVVVCIFG…MDRSSPDNSP (145 aa)). A Phosphothreonine modification is found at T916. Phosphoserine occurs at positions 924 and 928. The Calcium bowl motif lies at 976-998 (TELVNDTNVQFLDQDDDDDPDTE). Ca(2+) contacts are provided by Q985, D988, D991, and D993. The segment S10 stretch occupies residues 1005-1025 (FACGTAFAVSVLDSLMSATYF). Positions 1159–1184 (RASLSHSSHSSQSSSKKSSSVHSIPS) are enriched in low complexity. The tract at residues 1159 to 1209 (RASLSHSSHSSQSSSKKSSSVHSIPSTANRPNRPKSRESRDKQNRKEMVYR) is disordered. Positions 1193–1209 (KSRESRDKQNRKEMVYR) are enriched in basic and acidic residues. A phosphoserine mark is found at S1194 and S1197.

Belongs to the potassium channel family. Calcium-activated (TC 1.A.1.3) subfamily. KCa1.1/KCNMA1 sub-subfamily. As to quaternary structure, homotetramer; which constitutes the calcium-activated potassium channel. Interacts with beta subunits KCNMB1, KCNMB2, KCNMB3 and KCNMB4. Interacts with gamma subunits LRRC26, LRRC38, LRRC52 and LRRC55. Beta and gamma subunits are accessory, and modulate its activity. Interacts with RAB11B. Phosphorylated. Phosphorylation by kinases such as PKA and/or PKG. In smooth muscles, phosphorylation affects its activity. In terms of processing, palmitoylation by ZDHHC22 and ZDHHC23 within the intracellular linker between the S0 and S1 transmembrane domains regulates localization to the plasma membrane. Depalmitoylated by LYPLA1 and LYPLAL1, leading to retard exit from the trans-Golgi network.

It is found in the cell membrane. It carries out the reaction K(+)(in) = K(+)(out). Ethanol and carbon monoxide-bound heme increase channel activation. Heme inhibits channel activation. Its function is as follows. Potassium channel activated by both membrane depolarization or increase in cytosolic Ca(2+) that mediates export of K(+). It is also activated by the concentration of cytosolic Mg(2+). Its activation dampens the excitatory events that elevate the cytosolic Ca(2+) concentration and/or depolarize the cell membrane. It therefore contributes to repolarization of the membrane potential. Plays a key role in controlling excitability in a number of systems, such as regulation of the contraction of smooth muscle, the tuning of hair cells in the cochlea, regulation of transmitter release, and innate immunity. In smooth muscles, its activation by high level of Ca(2+), caused by ryanodine receptors in the sarcoplasmic reticulum, regulates the membrane potential. In cochlea cells, its number and kinetic properties partly determine the characteristic frequency of each hair cell and thereby helps to establish a tonotopic map. Kinetics of KCNMA1 channels are determined by alternative splicing, phosphorylation status and its combination with modulating beta subunits. Highly sensitive to both iberiotoxin (IbTx) and charybdotoxin (CTX). Functionally, potassium channel activated by both membrane depolarization or increase in cytosolic Ca(2+) that mediates export of K(+). This is Calcium-activated potassium channel subunit alpha-1 (Kcnma1) from Mus musculus (Mouse).